Reading from the N-terminus, the 247-residue chain is uncharacterized protein (247 aa).

The interval 225 to 247 (LASAPVPPSGSGNSGHRRANLGL) is disordered.

This is an uncharacterized protein from Methanocaldococcus jannaschii (strain ATCC 43067 / DSM 2661 / JAL-1 / JCM 10045 / NBRC 100440) (Methanococcus jannaschii).